The chain runs to 347 residues: NADH-ubiquinone oxidoreductase chain 2 (347 aa).

10 helical membrane-spanning segments follow: residues 3 to 23 (PPIL…VMLS), 25 to 45 (HWLL…PILM), 66 to 86 (ASML…QWVI), 93 to 115 (IASI…HFWV), 149 to 169 (INTN…GWGG), 178 to 198 (IMAY…TYNP), 201 to 221 (MILN…LFML), 237 to 257 (FPLI…LPPL), 274 to 294 (NMII…YFYL), and 325 to 345 (LLPP…MLSV).

This sequence belongs to the complex I subunit 2 family. In terms of assembly, core subunit of respiratory chain NADH dehydrogenase (Complex I) which is composed of 45 different subunits. Interacts with TMEM242.

The protein localises to the mitochondrion inner membrane. It carries out the reaction a ubiquinone + NADH + 5 H(+)(in) = a ubiquinol + NAD(+) + 4 H(+)(out). Its function is as follows. Core subunit of the mitochondrial membrane respiratory chain NADH dehydrogenase (Complex I) which catalyzes electron transfer from NADH through the respiratory chain, using ubiquinone as an electron acceptor. Essential for the catalytic activity and assembly of complex I. This Canis lupus (Gray wolf) protein is NADH-ubiquinone oxidoreductase chain 2.